The primary structure comprises 96 residues: Co-chaperonin GroES (96 aa).

Belongs to the GroES chaperonin family. As to quaternary structure, heptamer of 7 subunits arranged in a ring. Interacts with the chaperonin GroEL.

It is found in the cytoplasm. Its function is as follows. Together with the chaperonin GroEL, plays an essential role in assisting protein folding. The GroEL-GroES system forms a nano-cage that allows encapsulation of the non-native substrate proteins and provides a physical environment optimized to promote and accelerate protein folding. GroES binds to the apical surface of the GroEL ring, thereby capping the opening of the GroEL channel. The chain is Co-chaperonin GroES from Albidiferax ferrireducens (strain ATCC BAA-621 / DSM 15236 / T118) (Rhodoferax ferrireducens).